The chain runs to 315 residues: Protein FRA10AC1 homolog (315 aa).

At methionine 1 the chain carries N-acetylmethionine. The disordered stretch occupies residues 1–28 (MHGHGGYDSDFSDDEQGGGSSKKRKKTV). Phosphoserine occurs at positions 9 and 12. Position 36 is an N6-acetyllysine (lysine 36). The segment covering 225–235 (KEIKSTKKRSK) has biased composition (basic residues). The tract at residues 225 to 308 (KEIKSTKKRS…EKSQEEEFDD (84 aa)) is disordered. The segment covering 236–245 (TKTESDESPH) has biased composition (basic and acidic residues). Phosphoserine is present on residues serine 251 and serine 252. The segment covering 257-279 (SQGKDEGHSSSKRSEDSRNRNAG) has biased composition (basic and acidic residues). Phosphoserine occurs at positions 283 and 285.

Interacts with ESS2.

Its subcellular location is the nucleus. In terms of biological role, may be involved in pre-mRNA splicing. The polypeptide is Protein FRA10AC1 homolog (Fra10ac1) (Rattus norvegicus (Rat)).